We begin with the raw amino-acid sequence, 343 residues long: tRNA N6-adenosine threonylcarbamoyltransferase (343 aa).

Fe cation is bound by residues histidine 115 and histidine 119. Residues 137–141, aspartate 170, glycine 183, aspartate 187, and asparagine 276 each bind substrate; that span reads IVSGG. Aspartate 304 contacts Fe cation.

The protein belongs to the KAE1 / TsaD family. Fe(2+) is required as a cofactor.

It is found in the cytoplasm. The enzyme catalyses L-threonylcarbamoyladenylate + adenosine(37) in tRNA = N(6)-L-threonylcarbamoyladenosine(37) in tRNA + AMP + H(+). Functionally, required for the formation of a threonylcarbamoyl group on adenosine at position 37 (t(6)A37) in tRNAs that read codons beginning with adenine. Is involved in the transfer of the threonylcarbamoyl moiety of threonylcarbamoyl-AMP (TC-AMP) to the N6 group of A37, together with TsaE and TsaB. TsaD likely plays a direct catalytic role in this reaction. The protein is tRNA N6-adenosine threonylcarbamoyltransferase of Staphylococcus carnosus (strain TM300).